The sequence spans 768 residues: Probable beta-glucosidase M (768 aa).

The N-terminal stretch at 1-19 (MHAIAGLTGFLAGVSLSYA) is a signal peptide. Residues Asn-25, Asn-72, and Asn-259 are each glycosylated (N-linked (GlcNAc...) asparagine). Asp-287 is an active-site residue. 7 N-linked (GlcNAc...) asparagine glycosylation sites follow: Asn-315, Asn-322, Asn-394, Asn-434, Asn-472, Asn-543, and Asn-651.

The protein belongs to the glycosyl hydrolase 3 family.

The protein resides in the secreted. The enzyme catalyses Hydrolysis of terminal, non-reducing beta-D-glucosyl residues with release of beta-D-glucose.. It participates in glycan metabolism; cellulose degradation. In terms of biological role, beta-glucosidases are one of a number of cellulolytic enzymes involved in the degradation of cellulosic biomass. Catalyzes the last step releasing glucose from the inhibitory cellobiose. The sequence is that of Probable beta-glucosidase M (bglM) from Aspergillus flavus (strain ATCC 200026 / FGSC A1120 / IAM 13836 / NRRL 3357 / JCM 12722 / SRRC 167).